A 155-amino-acid chain; its full sequence is SsrA-binding protein (155 aa).

Belongs to the SmpB family.

The protein resides in the cytoplasm. Functionally, required for rescue of stalled ribosomes mediated by trans-translation. Binds to transfer-messenger RNA (tmRNA), required for stable association of tmRNA with ribosomes. tmRNA and SmpB together mimic tRNA shape, replacing the anticodon stem-loop with SmpB. tmRNA is encoded by the ssrA gene; the 2 termini fold to resemble tRNA(Ala) and it encodes a 'tag peptide', a short internal open reading frame. During trans-translation Ala-aminoacylated tmRNA acts like a tRNA, entering the A-site of stalled ribosomes, displacing the stalled mRNA. The ribosome then switches to translate the ORF on the tmRNA; the nascent peptide is terminated with the 'tag peptide' encoded by the tmRNA and targeted for degradation. The ribosome is freed to recommence translation, which seems to be the essential function of trans-translation. This chain is SsrA-binding protein, found in Geobacillus sp. (strain WCH70).